Here is a 164-residue protein sequence, read N- to C-terminus: Nucleotide-binding protein Daro_3028 (164 aa).

This sequence belongs to the YajQ family.

Nucleotide-binding protein. The protein is Nucleotide-binding protein Daro_3028 of Dechloromonas aromatica (strain RCB).